An 824-amino-acid chain; its full sequence is Glycerol-3-phosphate acyltransferase (824 aa).

The HXXXXD motif signature appears at 302–307 (CHRSHM).

It belongs to the GPAT/DAPAT family.

It is found in the cell inner membrane. It carries out the reaction sn-glycerol 3-phosphate + an acyl-CoA = a 1-acyl-sn-glycero-3-phosphate + CoA. The protein operates within phospholipid metabolism; CDP-diacylglycerol biosynthesis; CDP-diacylglycerol from sn-glycerol 3-phosphate: step 1/3. This is Glycerol-3-phosphate acyltransferase from Actinobacillus pleuropneumoniae serotype 3 (strain JL03).